The primary structure comprises 263 residues: Diphthine synthase (263 aa).

Residues Leu11, Asp89, Ala92, 117–118 (SV), Leu166, and Leu208 contribute to the S-adenosyl-L-methionine site.

It belongs to the diphthine synthase family. Homodimer.

The catalysed reaction is 2-[(3S)-amino-3-carboxypropyl]-L-histidyl-[translation elongation factor 2] + 3 S-adenosyl-L-methionine = diphthine-[translation elongation factor 2] + 3 S-adenosyl-L-homocysteine + 3 H(+). The protein operates within protein modification; peptidyl-diphthamide biosynthesis. Functionally, S-adenosyl-L-methionine-dependent methyltransferase that catalyzes the trimethylation of the amino group of the modified target histidine residue in translation elongation factor 2 (EF-2), to form an intermediate called diphthine. The three successive methylation reactions represent the second step of diphthamide biosynthesis. The protein is Diphthine synthase of Methanopyrus kandleri (strain AV19 / DSM 6324 / JCM 9639 / NBRC 100938).